Reading from the N-terminus, the 270-residue chain is Homeobox protein pal-1 (270 aa).

Disordered regions lie at residues 1–24 (MSVDVKSDFSENESSSTPSPTTVP), 96–130 (VKPPLSNGSSSSDSGMYPSPSDMMTPFPSTSSGAA), and 175–201 (LGNNHGKDRRSSSDGKTLPTGPGTNNV). Composition is skewed to low complexity over residues 14–24 (SSSTPSPTTVP) and 101–130 (SNGSSSSDSGMYPSPSDMMTPFPSTSSGAA). Residues 206 to 265 (ADKYRMVYSDYQRLELEKEFHTSPFITSDRKSQLSTMLSLTERQIKIWFQNRRAKDRRDK) constitute a DNA-binding region (homeobox).

It belongs to the Caudal homeobox family. Interacts with tir-1 and let-756. In terms of tissue distribution, blastomeres. Embryo. Oocytes.

The protein localises to the nucleus. Its subcellular location is the chromosome. It localises to the centromere. It is found in the kinetochore. Transcriptional activator. Interacts with promoter regions for tbx-8.9, tbx-9, elt-1, hnd-1, scrt-1, and vab-7 genes. Binds the sequence ATTTATGAC. Binds to the enhancer region of the hlh-1 gene promoter during embryonic body wall muscle development. Activates the gene for mab-5 in embryo development. Necessary for vab-7 expression in C blastomeres in the posterior of embryos. Required for posterior V6 neuroectoblast cell fate specification during postembryonic neurogenesis (patterning) which generates the characteristic ray lineage during male tail development. Binds to ced-3 promoter and activated expression which is crucial for tail-spike cell death. Has a role in E cell specification in endoderm development and body wall muscle development. In Caenorhabditis elegans, this protein is Homeobox protein pal-1 (pal-1).